The sequence spans 420 residues: MAPK/MAK/MRK overlapping kinase (420 aa).

One can recognise a Protein kinase domain in the interval 4–285; it reads YKAIGKIGEG…AHQALQHPYF (282 aa). Residues 10 to 18 and K33 each bind ATP; that span reads IGEGTFSEV. Catalysis depends on D128, which acts as the Proton acceptor. Over residues 311–322 the composition is skewed to polar residues; the sequence is PESSSHNWSFSQ. Positions 311 to 344 are disordered; it reads PESSSHNWSFSQEGRKQKQSLRHEEGHARRQGPT. Basic and acidic residues predominate over residues 323–338; the sequence is EGRKQKQSLRHEEGHA.

The protein belongs to the protein kinase superfamily. CMGC Ser/Thr protein kinase family. CDC2/CDKX subfamily. The cofactor is Mg(2+). Post-translationally, autophosphorylated. As to expression, highly expressed in testis, and less in kidney, brain and lung.

The protein resides in the cytoplasm. The protein localises to the cell projection. It localises to the cilium. It is found in the nucleus. The catalysed reaction is L-seryl-[protein] + ATP = O-phospho-L-seryl-[protein] + ADP + H(+). It carries out the reaction L-threonyl-[protein] + ATP = O-phospho-L-threonyl-[protein] + ADP + H(+). Its activity is regulated as follows. Phosphorylation appears to increase the enzymatic activity. Able to phosphorylate several exogenous substrates and to undergo autophosphorylation. Negatively regulates cilium length in a cAMP and mTORC1 signaling-dependent manner. This is MAPK/MAK/MRK overlapping kinase (Mok) from Mus musculus (Mouse).